We begin with the raw amino-acid sequence, 91 residues long: Small ribosomal subunit protein uS15c (91 aa).

Belongs to the universal ribosomal protein uS15 family. In terms of assembly, part of the 30S ribosomal subunit.

Its subcellular location is the plastid. The protein localises to the chloroplast. This chain is Small ribosomal subunit protein uS15c (rps15), found in Ceratophyllum demersum (Rigid hornwort).